The primary structure comprises 247 residues: Flagellar brake protein YcgR 2 (247 aa).

In terms of domain architecture, PilZ spans 124 to 237 (QRREYFRVET…DETRIQRYIA (114 aa)).

This sequence belongs to the YcgR family. Monomer. Interacts with the flagellar basal bodies.

The protein localises to the bacterial flagellum basal body. Functionally, acts as a flagellar brake, regulating swimming and swarming in a bis-(3'-5') cyclic diguanylic acid (c-di-GMP)-dependent manner. Binds 1 c-di-GMP dimer per subunit. Increasing levels of c-di-GMP lead to decreased motility. This Dechloromonas aromatica (strain RCB) protein is Flagellar brake protein YcgR 2.